The chain runs to 660 residues: Protein SCARECROW 2 (660 aa).

2 disordered regions span residues 1 to 33 (MGSS…ITSL) and 190 to 286 (SDPA…KQRD). Pro residues predominate over residues 192–229 (PAPPPPPPSHPALLPPDATAPPPPPTSVAALPPPPPAQ). Residues 259–272 (AAAAAAAAAAAAAA) are compositionally biased toward low complexity. A coiled-coil region spans residues 262–289 (AAAAAAAAAAAAKERKEEQRRKQRDEEG). Positions 273–286 (AKERKEEQRRKQRD) are enriched in basic and acidic residues. One can recognise a GRAS domain in the interval 283–653 (KQRDEEGLHL…LCLLTASAWR (371 aa)). The segment at 290–354 (LHLLTLLLQC…VSSCLGLYAP (65 aa)) is leucine repeat I (LRI). A LxCxE motif motif is present at residues 297–301 (LQCAE). The tract at residues 373 to 438 (FQVFNGISPF…GGPPRVRLTG (66 aa)) is VHIID. The short motif at 404–408 (VHIID) is the VHIID element. The leucine repeat II (LRII) stretch occupies residues 448-480 (ATGKRLSDFADTLGLPFEFCPVADKAGNLDPEK). Positions 489–576 (VAVHWLRHSL…QQLLSREIRN (88 aa)) are PFYRE. Residues 579 to 653 (AVGGPARTGD…LCLLTASAWR (75 aa)) are SAW.

Belongs to the GRAS family.

Its subcellular location is the cytoplasm. In terms of biological role, probable transcription factor involved in asmmetric cell division in the cortex/endodermis progenitor cell and in the process of stomata and ligule formation in leaves. This Oryza sativa subsp. indica (Rice) protein is Protein SCARECROW 2 (SCR2).